Reading from the N-terminus, the 351-residue chain is Phosphoribosylformylglycinamidine cyclo-ligase (351 aa).

It belongs to the AIR synthase family.

Its subcellular location is the cytoplasm. The enzyme catalyses 2-formamido-N(1)-(5-O-phospho-beta-D-ribosyl)acetamidine + ATP = 5-amino-1-(5-phospho-beta-D-ribosyl)imidazole + ADP + phosphate + H(+). It functions in the pathway purine metabolism; IMP biosynthesis via de novo pathway; 5-amino-1-(5-phospho-D-ribosyl)imidazole from N(2)-formyl-N(1)-(5-phospho-D-ribosyl)glycinamide: step 2/2. This Burkholderia mallei (strain NCTC 10247) protein is Phosphoribosylformylglycinamidine cyclo-ligase.